The sequence spans 796 residues: ATP-dependent DNA helicase PIF6 (796 aa).

The interval 197–230 is disordered; it reads RPTGLPSAHSGGKLPKHMGGDELNPQLEGSTTPG. 255 to 262 provides a ligand contact to ATP; sequence GSAGTGKT. The DNA-binding element occupies 636 to 655; sequence QAYVALSRVRSREDLMLTAF. 2 disordered regions span residues 692 to 719 and 762 to 796; these read KGKTRAKHPRSQGEKNSVDEGGNAPEEH and TSSAIPNFTQESNNGDANSQLQHPFSQNNLMVDDD.

This sequence belongs to the helicase family. PIF1 subfamily. As to quaternary structure, monomer. The cofactor is Mg(2+).

The protein localises to the nucleus. The catalysed reaction is Couples ATP hydrolysis with the unwinding of duplex DNA at the replication fork by translocating in the 5'-3' direction. This creates two antiparallel DNA single strands (ssDNA). The leading ssDNA polymer is the template for DNA polymerase III holoenzyme which synthesizes a continuous strand.. It catalyses the reaction ATP + H2O = ADP + phosphate + H(+). Its function is as follows. DNA-dependent ATPase and 5'-3' DNA helicase required for the maintenance of genome stability. This is ATP-dependent DNA helicase PIF6 from Trypanosoma brucei brucei (strain 927/4 GUTat10.1).